We begin with the raw amino-acid sequence, 440 residues long: tRNA-2-methylthio-N(6)-dimethylallyladenosine synthase (440 aa).

The 117-residue stretch at 5–121 (KKLYIKTYGC…LPEMEAKAGT (117 aa)) folds into the MTTase N-terminal domain. [4Fe-4S] cluster-binding residues include C14, C50, C84, C159, C163, and C166. A Radical SAM core domain is found at 145-378 (AKRGPTAFLT…LTRQQREVQD (234 aa)). The 63-residue stretch at 378–440 (DSMVGRELGV…ANSLAGELID (63 aa)) folds into the TRAM domain.

The protein belongs to the methylthiotransferase family. MiaB subfamily. In terms of assembly, monomer. It depends on [4Fe-4S] cluster as a cofactor.

The protein localises to the cytoplasm. It catalyses the reaction N(6)-dimethylallyladenosine(37) in tRNA + (sulfur carrier)-SH + AH2 + 2 S-adenosyl-L-methionine = 2-methylsulfanyl-N(6)-dimethylallyladenosine(37) in tRNA + (sulfur carrier)-H + 5'-deoxyadenosine + L-methionine + A + S-adenosyl-L-homocysteine + 2 H(+). In terms of biological role, catalyzes the methylthiolation of N6-(dimethylallyl)adenosine (i(6)A), leading to the formation of 2-methylthio-N6-(dimethylallyl)adenosine (ms(2)i(6)A) at position 37 in tRNAs that read codons beginning with uridine. The polypeptide is tRNA-2-methylthio-N(6)-dimethylallyladenosine synthase (Ruegeria sp. (strain TM1040) (Silicibacter sp.)).